Consider the following 266-residue polypeptide: Proteasome subunit alpha type-1 (266 aa).

It belongs to the peptidase T1A family. In terms of assembly, the 26S proteasome consists of a 20S proteasome core and two 19S regulatory subunits. The 20S proteasome core is composed of 28 subunits that are arranged in four stacked rings, resulting in a barrel-shaped structure. The two end rings are each formed by seven alpha subunits, and the two central rings are each formed by seven beta subunits. The catalytic chamber with the active sites is on the inside of the barrel.

The protein localises to the cytoplasm. The protein resides in the nucleus. Its function is as follows. The proteasome is a multicatalytic proteinase complex which is characterized by its ability to cleave peptides with Arg, Phe, Tyr, Leu, and Glu adjacent to the leaving group at neutral or slightly basic pH. The proteasome has an ATP-dependent proteolytic activity. The protein is Proteasome subunit alpha type-1 of Trypanosoma brucei brucei.